The chain runs to 1584 residues: Sterile alpha motif domain-containing protein 9-like (1584 aa).

The SAM domain occupies 14 to 79; sequence WTKEHVKKWV…RSYNKLNSKS (66 aa). Residues 76 to 122 are disordered; it reads NSKSPESDNHDPGQLDNSKPSKTEHQKNPKHTKKEEENSMSSNIDYD. Basic and acidic residues predominate over residues 80-112; that stretch reads PESDNHDPGQLDNSKPSKTEHQKNPKHTKKEEE.

As to quaternary structure, interacts with EEA1. In terms of tissue distribution, widely expressed in adult and fetal tissues. Expressed in the cerebellum. Variable expression in tumors. Down-regulated in breast cancer.

Its subcellular location is the early endosome. The protein resides in the mitochondrion. In terms of biological role, may be involved in endosome fusion. Mediates down-regulation of growth factor signaling via internalization of growth factor receptors. This is Sterile alpha motif domain-containing protein 9-like (SAMD9L) from Homo sapiens (Human).